Consider the following 472-residue polypeptide: tRNA-2-methylthio-N(6)-dimethylallyladenosine synthase (472 aa).

The tract at residues 1-24 (MTGTPDVFPPATPGGAPLVALPAG) is disordered. The MTTase N-terminal domain maps to 33 to 150 (GKLYIKTHGC…LPELIRARRE (118 aa)). The [4Fe-4S] cluster site is built by cysteine 42, cysteine 79, cysteine 113, cysteine 187, cysteine 191, and cysteine 194. In terms of domain architecture, Radical SAM core spans 173-407 (RAEGASAFVS…RINAHAAGIS (235 aa)). The 64-residue stretch at 408–471 (EKMVGTVQTV…TNSLRARVVA (64 aa)) folds into the TRAM domain.

This sequence belongs to the methylthiotransferase family. MiaB subfamily. In terms of assembly, monomer. [4Fe-4S] cluster serves as cofactor.

It localises to the cytoplasm. It carries out the reaction N(6)-dimethylallyladenosine(37) in tRNA + (sulfur carrier)-SH + AH2 + 2 S-adenosyl-L-methionine = 2-methylsulfanyl-N(6)-dimethylallyladenosine(37) in tRNA + (sulfur carrier)-H + 5'-deoxyadenosine + L-methionine + A + S-adenosyl-L-homocysteine + 2 H(+). Catalyzes the methylthiolation of N6-(dimethylallyl)adenosine (i(6)A), leading to the formation of 2-methylthio-N6-(dimethylallyl)adenosine (ms(2)i(6)A) at position 37 in tRNAs that read codons beginning with uridine. The sequence is that of tRNA-2-methylthio-N(6)-dimethylallyladenosine synthase from Stenotrophomonas maltophilia (strain K279a).